Here is a 355-residue protein sequence, read N- to C-terminus: Protein RecA (355 aa).

69 to 76 (GPESSGKT) contributes to the ATP binding site. A disordered region spans residues 329-355 (AYGLPDREETKREETAQIPDTEKTKDV).

The protein belongs to the RecA family.

It localises to the cytoplasm. Can catalyze the hydrolysis of ATP in the presence of single-stranded DNA, the ATP-dependent uptake of single-stranded DNA by duplex DNA, and the ATP-dependent hybridization of homologous single-stranded DNAs. It interacts with LexA causing its activation and leading to its autocatalytic cleavage. The polypeptide is Protein RecA (Desulfotalea psychrophila (strain LSv54 / DSM 12343)).